We begin with the raw amino-acid sequence, 315 residues long: Protein MFI (315 aa).

Can homodimerize. Interacts with MFF; the interaction inhibits MFF interaction with DNM1L. Enriched in the pancreatic beta cell and the testis and is expressed at low levels in other tissues tested.

The protein resides in the cytoplasm. It is found in the cytosol. It localises to the mitochondrion outer membrane. In terms of biological role, acts as an inhibitor of mitochondrial fission. Interacts with MFF and prevents DNM1L recruitment to mitochondria, promoting a more fused mitochondrial network. The sequence is that of Protein MFI from Mus musculus (Mouse).